Reading from the N-terminus, the 37-residue chain is Kappa-actitoxin-Bgr1a (37 aa).

A ShKT domain is found at 2-37 (CRDWFKETACRHAKSLGNCRTSQKYRANCAKTCELC). 3 disulfides stabilise this stretch: Cys2-Cys37, Cys11-Cys30, and Cys20-Cys34. The segment at 25 to 26 (KY) is crucial for binding to potassium channels.

This sequence belongs to the sea anemone type 1 potassium channel toxin family. Type 1b subfamily.

Its subcellular location is the secreted. It is found in the nematocyst. Inhibits voltage-dependent potassium channels of the Kv1 family (Kv1.1/KCNA1 (Kd=6 nM), Kv1.2/KCNA2 (Kd=15 nM), Kv1.3/KCNA3 (Kd=10-39 nM), Kv1.6/KCNA6, and KCa3.1/KCNN4 (Kd=172 nM)). This is Kappa-actitoxin-Bgr1a from Bunodosoma granuliferum (Red warty sea anemone).